A 223-amino-acid polypeptide reads, in one-letter code: MKLSLNETRVIGVLIEKEVTTPDQYPMSLNALTNACNQKTNREPVLNLSETEVQESLDALAKQGLVVESRVGNRIPKYKHRFCNSEFGELQFTKQELAIVCTLFLRGAQTPGELRTRTNRLCTFADVQETEKVLQGLIDHSRGSYVVKLEREPGKRESRYAHLFSGDAATTVAQIPATTNTSTPAQSNSPQNNAELLERVEMLELTVEELQNQINKLVEQLGG.

It belongs to the UPF0502 family.

This chain is UPF0502 protein Sde_2426, found in Saccharophagus degradans (strain 2-40 / ATCC 43961 / DSM 17024).